A 378-amino-acid polypeptide reads, in one-letter code: Ribosomal RNA large subunit methyltransferase G (378 aa).

This sequence belongs to the methyltransferase superfamily. RlmG family.

The protein localises to the cytoplasm. It catalyses the reaction guanosine(1835) in 23S rRNA + S-adenosyl-L-methionine = N(2)-methylguanosine(1835) in 23S rRNA + S-adenosyl-L-homocysteine + H(+). Its function is as follows. Specifically methylates the guanine in position 1835 (m2G1835) of 23S rRNA. The sequence is that of Ribosomal RNA large subunit methyltransferase G from Citrobacter koseri (strain ATCC BAA-895 / CDC 4225-83 / SGSC4696).